Consider the following 298-residue polypeptide: Ethanolamine ammonia-lyase small subunit (298 aa).

The interval 17–37 (MGQDVPQPVAPSKQEGAKPQC) is disordered. Adenosylcob(III)alamin is bound by residues Val210, Glu231, and Cys261.

Belongs to the EutC family. As to quaternary structure, the basic unit is a heterodimer which dimerizes to form tetramers. The heterotetramers trimerize; 6 large subunits form a core ring with 6 small subunits projecting outwards. Requires adenosylcob(III)alamin as cofactor.

It localises to the bacterial microcompartment. The catalysed reaction is ethanolamine = acetaldehyde + NH4(+). Its pathway is amine and polyamine degradation; ethanolamine degradation. Catalyzes the deamination of various vicinal amino-alcohols to oxo compounds. Allows this organism to utilize ethanolamine as the sole source of nitrogen and carbon in the presence of external vitamin B12. This is Ethanolamine ammonia-lyase small subunit from Salmonella paratyphi A (strain ATCC 9150 / SARB42).